Reading from the N-terminus, the 183-residue chain is Glutathione-regulated potassium-efflux system ancillary protein KefG (183 aa).

The protein belongs to the NAD(P)H dehydrogenase (quinone) family. KefG subfamily. In terms of assembly, interacts with KefB.

Its subcellular location is the cell inner membrane. It carries out the reaction a quinone + NADH + H(+) = a quinol + NAD(+). It catalyses the reaction a quinone + NADPH + H(+) = a quinol + NADP(+). Regulatory subunit of a potassium efflux system that confers protection against electrophiles. Required for full activity of KefB. The chain is Glutathione-regulated potassium-efflux system ancillary protein KefG from Salmonella enteritidis PT4 (strain P125109).